Here is a 462-residue protein sequence, read N- to C-terminus: Glycine--tRNA ligase (462 aa).

2 residues coordinate substrate: Arg-100 and Glu-174. Residues 206–208, 216–221, 290–291, and 334–337 each bind ATP; these read RNE, FRTREF, EL, and GADR. Position 221–225 (221–225) interacts with substrate; that stretch reads FEQME. 330–334 contacts substrate; it reads EPSLG.

The protein belongs to the class-II aminoacyl-tRNA synthetase family. As to quaternary structure, homodimer.

The protein localises to the cytoplasm. The enzyme catalyses tRNA(Gly) + glycine + ATP = glycyl-tRNA(Gly) + AMP + diphosphate. Catalyzes the attachment of glycine to tRNA(Gly). The polypeptide is Glycine--tRNA ligase (Acetivibrio thermocellus (strain ATCC 27405 / DSM 1237 / JCM 9322 / NBRC 103400 / NCIMB 10682 / NRRL B-4536 / VPI 7372) (Clostridium thermocellum)).